The chain runs to 87 residues: Cobalt transport protein CbiN (87 aa).

2 helical membrane-spanning segments follow: residues 4–24 and 58–78; these read LLLL…EWAG and MLFS…LGYY.

It belongs to the CbiN family. As to quaternary structure, forms an energy-coupling factor (ECF) transporter complex composed of an ATP-binding protein (A component, CbiO), a transmembrane protein (T component, CbiQ) and 2 possible substrate-capture proteins (S components, CbiM and CbiN) of unknown stoichimetry.

The protein resides in the cell membrane. Its pathway is cofactor biosynthesis; adenosylcobalamin biosynthesis. In terms of biological role, part of the energy-coupling factor (ECF) transporter complex CbiMNOQ involved in cobalt import. The polypeptide is Cobalt transport protein CbiN (Archaeoglobus fulgidus (strain ATCC 49558 / DSM 4304 / JCM 9628 / NBRC 100126 / VC-16)).